The sequence spans 508 residues: Cytochrome c-552 (508 aa).

Residues 1–23 form the signal peptide; it reads MNKSYKILLTGSVIAIGAMGLMA. Position 103 (His-103) interacts with heme c. Cys-131, Cys-134, and Lys-135 together coordinate heme. Heme c-binding residues include Cys-169, Cys-172, His-173, Cys-211, Cys-214, and His-215. The Ca(2+) site is built by Glu-217, Tyr-218, Lys-274, and Gln-276. Tyr-218 serves as a coordination point for substrate. Residue His-277 coordinates substrate. Heme c-binding residues include His-288, Cys-295, Cys-298, His-299, His-313, Cys-326, Cys-329, His-330, and His-405. The tract at residues 485–508 is disordered; it reads GRLDPKTLEGMSNKSSWSQTELSQ. Polar residues predominate over residues 494–508; it reads GMSNKSSWSQTELSQ.

This sequence belongs to the cytochrome c-552 family. Ca(2+) is required as a cofactor. Requires heme c as cofactor.

The protein resides in the periplasm. It carries out the reaction 6 Fe(III)-[cytochrome c] + NH4(+) + 2 H2O = 6 Fe(II)-[cytochrome c] + nitrite + 8 H(+). It participates in nitrogen metabolism; nitrate reduction (assimilation). Functionally, catalyzes the reduction of nitrite to ammonia, consuming six electrons in the process. The chain is Cytochrome c-552 from Desulfotalea psychrophila (strain LSv54 / DSM 12343).